The following is a 218-amino-acid chain: Probable transaldolase (218 aa).

Lys87 serves as the catalytic Schiff-base intermediate with substrate.

It belongs to the transaldolase family. Type 3B subfamily.

The protein resides in the cytoplasm. It carries out the reaction D-sedoheptulose 7-phosphate + D-glyceraldehyde 3-phosphate = D-erythrose 4-phosphate + beta-D-fructose 6-phosphate. The protein operates within carbohydrate degradation; pentose phosphate pathway; D-glyceraldehyde 3-phosphate and beta-D-fructose 6-phosphate from D-ribose 5-phosphate and D-xylulose 5-phosphate (non-oxidative stage): step 2/3. Its function is as follows. Transaldolase is important for the balance of metabolites in the pentose-phosphate pathway. This is Probable transaldolase from Parabacteroides distasonis (strain ATCC 8503 / DSM 20701 / CIP 104284 / JCM 5825 / NCTC 11152).